The following is a 162-amino-acid chain: Caveolin-2 (162 aa).

Residues 1 to 86 (MGLETEKADV…FEVSKYVIYK (86 aa)) are Cytoplasmic-facing. Residue tyrosine 19 is modified to Phosphotyrosine; by SRC. Phosphoserine occurs at positions 20, 23, and 36. Residues 87-107 (FLTLLLAMPMAFAAGVLFATL) constitute an intramembrane region (helical). The Cytoplasmic portion of the chain corresponds to 108-162 (SCLHIWIIMPFVKTCLMVLPSVQTIWKSVTDAVIAPLCSSVGRSFSSVSLQVSHD).

This sequence belongs to the caveolin family. As to quaternary structure, monomer or homodimer. Interacts with CAV1; the interaction forms a stable heterooligomeric complex that is required for targeting to lipid rafts and for caveolae formation. Tyrosine phosphorylated forms do not form heterooligomers with the Tyr-19-phosphorylated form existing as a monomer or dimer. Interacts (tyrosine phosphorylated form) with the SH2 domain-containing proteins, RASA1, NCK1 and SRC. Interacts (tyrosine phosphorylated form) with INSR. Interacts (Tyr-19 phosphorylated form) with MAPK1 (phosphorylated form); the interaction, promoted by insulin, leads to nuclear location and MAPK1 activation. Interacts with STAT3; the interaction is increased on insulin-induced tyrosine phosphorylation leading to STAT activation. In terms of processing, phosphorylated on serine and tyrosine residues. CAV1 promotes phosphorylation on Ser-23 which then targets the complex to the plasma membrane, lipid rafts and caveolae. Phosphorylation on Ser-36 appears to modulate mitosis in endothelial cells. Phosphorylation on Tyr-19 is required for insulin-induced phosphorylation of MAPK1 and DNA binding of STAT3. Tyrosine phosphorylation is induced by both EGF and insulin.

Its subcellular location is the nucleus. The protein localises to the cytoplasm. It is found in the golgi apparatus membrane. The protein resides in the cell membrane. It localises to the membrane. Its subcellular location is the caveola. Functionally, may act as a scaffolding protein within caveolar membranes. Interacts directly with G-protein alpha subunits and can functionally regulate their activity. Acts as an accessory protein in conjunction with CAV1 in targeting to lipid rafts and driving caveolae formation. The Ser-36 phosphorylated form has a role in modulating mitosis in endothelial cells. Positive regulator of cellular mitogenesis of the MAPK signaling pathway. Required for the insulin-stimulated nuclear translocation and activation of MAPK1 and STAT3, and the subsequent regulation of cell cycle progression. The polypeptide is Caveolin-2 (CAV2) (Canis lupus familiaris (Dog)).